The following is a 218-amino-acid chain: 7-cyano-7-deazaguanine synthase (218 aa).

9–19 is a binding site for ATP; that stretch reads YSGGMDSFTVL. Positions 185, 193, 196, and 199 each coordinate Zn(2+).

This sequence belongs to the QueC family. Zn(2+) serves as cofactor.

The enzyme catalyses 7-carboxy-7-deazaguanine + NH4(+) + ATP = 7-cyano-7-deazaguanine + ADP + phosphate + H2O + H(+). The protein operates within purine metabolism; 7-cyano-7-deazaguanine biosynthesis. Its function is as follows. Catalyzes the ATP-dependent conversion of 7-carboxy-7-deazaguanine (CDG) to 7-cyano-7-deazaguanine (preQ(0)). The protein is 7-cyano-7-deazaguanine synthase of Alteromonas mediterranea (strain DSM 17117 / CIP 110805 / LMG 28347 / Deep ecotype).